A 1812-amino-acid chain; its full sequence is Putative surface cell antigen sca2 (1812 aa).

The first 17 residues, 1–17 (MSTCLLTSSFLSTSARA), serve as a signal peptide directing secretion. Composition is skewed to polar residues over residues 344–357 (FLNN…STGR) and 371–382 (MSNQSIHNTGTS). 3 disordered regions span residues 344–382 (FLNN…TGTS), 648–691 (LEQT…QGFS), and 1338–1462 (KQEN…KKDV). Positions 656-685 (PNPPPLPLNGGIPNPPPLPLNGSMPPPPPL) are enriched in pro residues. Composition is skewed to basic and acidic residues over residues 1349 to 1367 (STKD…EQSD) and 1382 to 1393 (SKNDKSSDDKKS). The span at 1401–1416 (DEDDTGYATDEEELEE) shows a compositional bias: acidic residues. Low complexity predominate over residues 1417–1455 (SNSTTNEELEESNSTTNEELEESNSTTNEELEESNSTTN). An Autotransporter domain is found at 1533 to 1812 (ETSINRGVWI…QGLIKLKVNL (280 aa)).

Its subcellular location is the cell outer membrane. This is Putative surface cell antigen sca2 (sca2) from Rickettsia sibirica (strain ATCC VR-151 / 246).